Reading from the N-terminus, the 418-residue chain is 3-phosphoshikimate 1-carboxyvinyltransferase (418 aa).

Lys-26, Ser-27, and Arg-31 together coordinate 3-phosphoshikimate. Lys-26 is a phosphoenolpyruvate binding site. Phosphoenolpyruvate-binding residues include Gly-97 and Arg-125. Ser-170, Ser-171, Gln-172, Asp-297, Asn-320, and Lys-324 together coordinate 3-phosphoshikimate. Phosphoenolpyruvate is bound at residue Gln-172. The active-site Proton acceptor is Asp-297. Phosphoenolpyruvate contacts are provided by Arg-328, Arg-375, and Lys-400.

It belongs to the EPSP synthase family. As to quaternary structure, monomer.

It is found in the cytoplasm. It carries out the reaction 3-phosphoshikimate + phosphoenolpyruvate = 5-O-(1-carboxyvinyl)-3-phosphoshikimate + phosphate. The protein operates within metabolic intermediate biosynthesis; chorismate biosynthesis; chorismate from D-erythrose 4-phosphate and phosphoenolpyruvate: step 6/7. Functionally, catalyzes the transfer of the enolpyruvyl moiety of phosphoenolpyruvate (PEP) to the 5-hydroxyl of shikimate-3-phosphate (S3P) to produce enolpyruvyl shikimate-3-phosphate and inorganic phosphate. In Pseudomonas savastanoi pv. phaseolicola (strain 1448A / Race 6) (Pseudomonas syringae pv. phaseolicola (strain 1448A / Race 6)), this protein is 3-phosphoshikimate 1-carboxyvinyltransferase.